Reading from the N-terminus, the 271-residue chain is Ribosomal RNA small subunit methyltransferase A (271 aa).

Histidine 18, leucine 20, glycine 45, glutamate 66, aspartate 91, and asparagine 113 together coordinate S-adenosyl-L-methionine.

The protein belongs to the class I-like SAM-binding methyltransferase superfamily. rRNA adenine N(6)-methyltransferase family. RsmA subfamily.

The protein resides in the cytoplasm. It carries out the reaction adenosine(1518)/adenosine(1519) in 16S rRNA + 4 S-adenosyl-L-methionine = N(6)-dimethyladenosine(1518)/N(6)-dimethyladenosine(1519) in 16S rRNA + 4 S-adenosyl-L-homocysteine + 4 H(+). In terms of biological role, specifically dimethylates two adjacent adenosines (A1518 and A1519) in the loop of a conserved hairpin near the 3'-end of 16S rRNA in the 30S particle. May play a critical role in biogenesis of 30S subunits. This chain is Ribosomal RNA small subunit methyltransferase A, found in Baumannia cicadellinicola subsp. Homalodisca coagulata.